Reading from the N-terminus, the 1818-residue chain is Cytadherence high molecular weight protein 2 (1818 aa).

Coiled coils occupy residues 31–880 (LESA…KQRE), 919–1607 (ELKI…DNKH), 1644–1755 (HLFE…QAVQ), and 1786–1817 (LATQ…QKAA).

Post-translationally, phosphorylated mainly on serine residues.

Functionally, component of the cytoskeleton-like structure which stabilizes the shape of the wall-less Mycoplasma. This cytoskeleton-like network of accessory proteins containing HMW proteins 1 to 5 allows the proper anchoring of cytadhesin proteins in the mycoplasmal membrane at the attachment organelle. This Mycoplasma pneumoniae (strain ATCC 29342 / M129 / Subtype 1) (Mycoplasmoides pneumoniae) protein is Cytadherence high molecular weight protein 2 (hmw2).